A 394-amino-acid polypeptide reads, in one-letter code: Carbamoyl phosphate synthase small chain (394 aa).

The tract at residues methionine 1–arginine 188 is CPSase. 3 residues coordinate L-glutamine: serine 49, glycine 240, and glycine 242. The region spanning arginine 192–glycine 379 is the Glutamine amidotransferase type-1 domain. The active-site Nucleophile is cysteine 267. Positions 268, 271, 309, 311, and 312 each coordinate L-glutamine. Residues histidine 352 and glutamate 354 contribute to the active site.

This sequence belongs to the CarA family. As to quaternary structure, composed of two chains; the small (or glutamine) chain promotes the hydrolysis of glutamine to ammonia, which is used by the large (or ammonia) chain to synthesize carbamoyl phosphate. Tetramer of heterodimers (alpha,beta)4.

The catalysed reaction is hydrogencarbonate + L-glutamine + 2 ATP + H2O = carbamoyl phosphate + L-glutamate + 2 ADP + phosphate + 2 H(+). The enzyme catalyses L-glutamine + H2O = L-glutamate + NH4(+). Its pathway is amino-acid biosynthesis; L-arginine biosynthesis; carbamoyl phosphate from bicarbonate: step 1/1. The protein operates within pyrimidine metabolism; UMP biosynthesis via de novo pathway; (S)-dihydroorotate from bicarbonate: step 1/3. In terms of biological role, small subunit of the glutamine-dependent carbamoyl phosphate synthetase (CPSase). CPSase catalyzes the formation of carbamoyl phosphate from the ammonia moiety of glutamine, carbonate, and phosphate donated by ATP, constituting the first step of 2 biosynthetic pathways, one leading to arginine and/or urea and the other to pyrimidine nucleotides. The small subunit (glutamine amidotransferase) binds and cleaves glutamine to supply the large subunit with the substrate ammonia. This Deinococcus radiodurans (strain ATCC 13939 / DSM 20539 / JCM 16871 / CCUG 27074 / LMG 4051 / NBRC 15346 / NCIMB 9279 / VKM B-1422 / R1) protein is Carbamoyl phosphate synthase small chain.